The chain runs to 193 residues: Peptide deformylase 2 (193 aa).

2 residues coordinate Fe cation: Cys-100 and His-142. Glu-143 is a catalytic residue. Residue His-146 participates in Fe cation binding.

The protein belongs to the polypeptide deformylase family. The cofactor is Fe(2+).

It catalyses the reaction N-terminal N-formyl-L-methionyl-[peptide] + H2O = N-terminal L-methionyl-[peptide] + formate. In terms of biological role, removes the formyl group from the N-terminal Met of newly synthesized proteins. Requires at least a dipeptide for an efficient rate of reaction. N-terminal L-methionine is a prerequisite for activity but the enzyme has broad specificity at other positions. In Corynebacterium efficiens (strain DSM 44549 / YS-314 / AJ 12310 / JCM 11189 / NBRC 100395), this protein is Peptide deformylase 2.